The sequence spans 187 residues: Inner membrane-spanning protein YciB (187 aa).

The next 5 helical transmembrane spans lie at 25–45 (ATGA…ALYK), 50–70 (MQLI…FLHD), 76–96 (WKVT…HVMG), 118–138 (INWA…YVAY), and 148–168 (FKVF…GGYI).

This sequence belongs to the YciB family.

The protein resides in the cell inner membrane. In terms of biological role, plays a role in cell envelope biogenesis, maintenance of cell envelope integrity and membrane homeostasis. The sequence is that of Inner membrane-spanning protein YciB from Vibrio vulnificus (strain CMCP6).